Reading from the N-terminus, the 39-residue chain is Photosystem II reaction center protein L (39 aa).

A helical membrane pass occupies residues 18–38 (SLYLGLLIVFTTGILFSSYFF).

It belongs to the PsbL family. In terms of assembly, PSII is composed of 1 copy each of membrane proteins PsbA, PsbB, PsbC, PsbD, PsbE, PsbF, PsbH, PsbI, PsbJ, PsbK, PsbL, PsbM, PsbT, PsbX, PsbY, PsbZ, Psb30/Ycf12, peripheral proteins PsbO, CyanoQ (PsbQ), PsbU, PsbV and a large number of cofactors. It forms dimeric complexes.

It localises to the cellular thylakoid membrane. In terms of biological role, one of the components of the core complex of photosystem II (PSII). PSII is a light-driven water:plastoquinone oxidoreductase that uses light energy to abstract electrons from H(2)O, generating O(2) and a proton gradient subsequently used for ATP formation. It consists of a core antenna complex that captures photons, and an electron transfer chain that converts photonic excitation into a charge separation. This subunit is found at the monomer-monomer interface and is required for correct PSII assembly and/or dimerization. The sequence is that of Photosystem II reaction center protein L from Synechococcus sp. (strain CC9311).